The primary structure comprises 134 residues: Small ribosomal subunit protein bS16 (134 aa).

The disordered stretch occupies residues 79–134 (AGIAKRPSRNNPTKGEPGKKAQERLALAKQAEEEAAAKAAEAAAAAAAPAEEAASE). A compositionally biased stretch (low complexity) spans 115–134 (AKAAEAAAAAAAPAEEAASE).

The protein belongs to the bacterial ribosomal protein bS16 family.

This Brucella suis (strain ATCC 23445 / NCTC 10510) protein is Small ribosomal subunit protein bS16.